A 236-amino-acid chain; its full sequence is 1-(5-phosphoribosyl)-5-[(5-phosphoribosylamino)methylideneamino] imidazole-4-carboxamide isomerase (236 aa).

Aspartate 8 functions as the Proton acceptor in the catalytic mechanism. The Proton donor role is filled by aspartate 129.

Belongs to the HisA/HisF family.

Its subcellular location is the cytoplasm. The catalysed reaction is 1-(5-phospho-beta-D-ribosyl)-5-[(5-phospho-beta-D-ribosylamino)methylideneamino]imidazole-4-carboxamide = 5-[(5-phospho-1-deoxy-D-ribulos-1-ylimino)methylamino]-1-(5-phospho-beta-D-ribosyl)imidazole-4-carboxamide. Its pathway is amino-acid biosynthesis; L-histidine biosynthesis; L-histidine from 5-phospho-alpha-D-ribose 1-diphosphate: step 4/9. The sequence is that of 1-(5-phosphoribosyl)-5-[(5-phosphoribosylamino)methylideneamino] imidazole-4-carboxamide isomerase from Methanoregula boonei (strain DSM 21154 / JCM 14090 / 6A8).